The primary structure comprises 148 residues: Lipoprotein MlpA (148 aa).

A signal peptide spans 1–17 (MKIINILFCLFLLLLNS). A lipid anchor (N-palmitoyl cysteine) is attached at C18. The S-diacylglycerol cysteine moiety is linked to residue C18. The disordered stretch occupies residues 26–58 (LKNNAQQTKSRGKRDLTQKEATPEKPKSKEELL). Basic and acidic residues predominate over residues 38–58 (KRDLTQKEATPEKPKSKEELL).

Belongs to the Multicopy lipoprotein (Mlp) family.

The protein localises to the cell outer membrane. In terms of biological role, an outer membrane protein that may participate in pathogenesis. Some human Lyme disease patients have antibodies against this protein. The Mlp proteins probably undergo intragenic recombination, generating new alleles. This is Lipoprotein MlpA (mlpA) from Borreliella burgdorferi (strain ATCC 35210 / DSM 4680 / CIP 102532 / B31) (Borrelia burgdorferi).